A 241-amino-acid chain; its full sequence is MAGHSKWANIKHKKAAADAKRGKIWTRLIKEITVAAKLGGGDPDSNPRLRLSMDKAMDANMPKDNIQRAIQRGVGGLEGVNYEEIRYEGYGLSGAAIIVDCLTDNRTRTVAEVRHAFSKHGGNMGTEGSVAFMFTHCGQFLFAPGTPEDKLMDAALEAGADDVVTNDDGSIEVTCPPNDFSAVKAALEGAGFKAEVADVVMKPQNEVSFSGDDAAKMQKLLDALENLDDVQEVFTNAVIED.

This sequence belongs to the TACO1 family.

The protein localises to the cytoplasm. This is Probable transcriptional regulatory protein RALTA_A0859 from Cupriavidus taiwanensis (strain DSM 17343 / BCRC 17206 / CCUG 44338 / CIP 107171 / LMG 19424 / R1) (Ralstonia taiwanensis (strain LMG 19424)).